We begin with the raw amino-acid sequence, 145 residues long: D-aminoacyl-tRNA deacylase (145 aa).

Residues 137-138 carry the Gly-cisPro motif, important for rejection of L-amino acids motif; the sequence is GP.

This sequence belongs to the DTD family. As to quaternary structure, homodimer.

It is found in the cytoplasm. It carries out the reaction glycyl-tRNA(Ala) + H2O = tRNA(Ala) + glycine + H(+). The catalysed reaction is a D-aminoacyl-tRNA + H2O = a tRNA + a D-alpha-amino acid + H(+). In terms of biological role, an aminoacyl-tRNA editing enzyme that deacylates mischarged D-aminoacyl-tRNAs. Also deacylates mischarged glycyl-tRNA(Ala), protecting cells against glycine mischarging by AlaRS. Acts via tRNA-based rather than protein-based catalysis; rejects L-amino acids rather than detecting D-amino acids in the active site. By recycling D-aminoacyl-tRNA to D-amino acids and free tRNA molecules, this enzyme counteracts the toxicity associated with the formation of D-aminoacyl-tRNA entities in vivo and helps enforce protein L-homochirality. The chain is D-aminoacyl-tRNA deacylase from Francisella tularensis subsp. holarctica (strain LVS).